A 901-amino-acid chain; its full sequence is Viral-enhancing factor (901 aa).

Positions 27-330 (HRRTEVGVVL…IFTWLYNPQR (304 aa)) constitute a Peptidase M60 domain. Asparagine 65, asparagine 265, asparagine 339, asparagine 349, asparagine 540, asparagine 594, asparagine 595, asparagine 642, asparagine 683, and asparagine 698 each carry an N-linked (GlcNAc...) asparagine; by host glycan.

Involved in disruption of the peritrophic membrane and fusion of nucleocapsids with midgut cells. The protein is Viral-enhancing factor (VEF) of Trichoplusia ni (Cabbage looper).